We begin with the raw amino-acid sequence, 505 residues long: Aspartyl/glutamyl-tRNA(Asn/Gln) amidotransferase subunit B (505 aa).

A disordered region spans residues 220 to 241 (NVSLRPRPAPGDPDAPFGTRSE).

The protein belongs to the GatB/GatE family. GatB subfamily. Heterotrimer of A, B and C subunits.

It catalyses the reaction L-glutamyl-tRNA(Gln) + L-glutamine + ATP + H2O = L-glutaminyl-tRNA(Gln) + L-glutamate + ADP + phosphate + H(+). The enzyme catalyses L-aspartyl-tRNA(Asn) + L-glutamine + ATP + H2O = L-asparaginyl-tRNA(Asn) + L-glutamate + ADP + phosphate + 2 H(+). Functionally, allows the formation of correctly charged Asn-tRNA(Asn) or Gln-tRNA(Gln) through the transamidation of misacylated Asp-tRNA(Asn) or Glu-tRNA(Gln) in organisms which lack either or both of asparaginyl-tRNA or glutaminyl-tRNA synthetases. The reaction takes place in the presence of glutamine and ATP through an activated phospho-Asp-tRNA(Asn) or phospho-Glu-tRNA(Gln). This is Aspartyl/glutamyl-tRNA(Asn/Gln) amidotransferase subunit B from Frankia casuarinae (strain DSM 45818 / CECT 9043 / HFP020203 / CcI3).